We begin with the raw amino-acid sequence, 126 residues long: Small ribosomal subunit protein uS13 (126 aa).

The interval 95 to 126 (GLPVRGQRTHTNARTRKGPRKTVAGKKKPGKK) is disordered.

This sequence belongs to the universal ribosomal protein uS13 family. As to quaternary structure, part of the 30S ribosomal subunit. Forms a loose heterodimer with protein S19. Forms two bridges to the 50S subunit in the 70S ribosome.

Located at the top of the head of the 30S subunit, it contacts several helices of the 16S rRNA. In the 70S ribosome it contacts the 23S rRNA (bridge B1a) and protein L5 of the 50S subunit (bridge B1b), connecting the 2 subunits; these bridges are implicated in subunit movement. Contacts the tRNAs in the A and P-sites. The protein is Small ribosomal subunit protein uS13 of Acidothermus cellulolyticus (strain ATCC 43068 / DSM 8971 / 11B).